Consider the following 276-residue polypeptide: Phosphatidylglycerol--prolipoprotein diacylglyceryl transferase (276 aa).

The next 7 membrane-spanning stretches (helical) occupy residues 17–37 (FGPF…VLGW), 59–79 (FLSW…ILFY), 94–114 (VWDG…AILI), 132–152 (VPVP…GELW), 177–197 (PSEL…LLIA), 208–225 (GYLG…RTTA), and 235–255 (LGYL…MIVI). R142 contributes to the a 1,2-diacyl-sn-glycero-3-phospho-(1'-sn-glycerol) binding site.

Belongs to the Lgt family.

The protein resides in the cell inner membrane. The catalysed reaction is L-cysteinyl-[prolipoprotein] + a 1,2-diacyl-sn-glycero-3-phospho-(1'-sn-glycerol) = an S-1,2-diacyl-sn-glyceryl-L-cysteinyl-[prolipoprotein] + sn-glycerol 1-phosphate + H(+). It functions in the pathway protein modification; lipoprotein biosynthesis (diacylglyceryl transfer). Catalyzes the transfer of the diacylglyceryl group from phosphatidylglycerol to the sulfhydryl group of the N-terminal cysteine of a prolipoprotein, the first step in the formation of mature lipoproteins. The chain is Phosphatidylglycerol--prolipoprotein diacylglyceryl transferase from Acidiphilium cryptum (strain JF-5).